Here is a 219-residue protein sequence, read N- to C-terminus: tRNA (guanine-N(7)-)-methyltransferase (219 aa).

Glu43, Asp68, Glu101, and Asn124 together coordinate S-adenosyl-L-methionine. Substrate-binding residues include Lys128 and Asp160.

Belongs to the class I-like SAM-binding methyltransferase superfamily. TrmB family.

The catalysed reaction is guanosine(46) in tRNA + S-adenosyl-L-methionine = N(7)-methylguanosine(46) in tRNA + S-adenosyl-L-homocysteine. The protein operates within tRNA modification; N(7)-methylguanine-tRNA biosynthesis. Its function is as follows. Catalyzes the formation of N(7)-methylguanine at position 46 (m7G46) in tRNA. In Clostridium beijerinckii (strain ATCC 51743 / NCIMB 8052) (Clostridium acetobutylicum), this protein is tRNA (guanine-N(7)-)-methyltransferase.